We begin with the raw amino-acid sequence, 115 residues long: UPF0342 protein Bsph_0375 (115 aa).

The protein belongs to the UPF0342 family.

The chain is UPF0342 protein Bsph_0375 from Lysinibacillus sphaericus (strain C3-41).